Reading from the N-terminus, the 505-residue chain is Zinc finger protein 649 (505 aa).

In terms of domain architecture, KRAB spans leucine 8–proline 79. A Glycyl lysine isopeptide (Lys-Gly) (interchain with G-Cter in SUMO2) cross-link involves residue lysine 112. 10 C2H2-type zinc fingers span residues histidine 178–histidine 200, histidine 206–histidine 228, histidine 234–histidine 256, tyrosine 262–histidine 284, histidine 290–histidine 312, histidine 318–histidine 340, tyrosine 346–histidine 368, phenylalanine 374–histidine 396, tyrosine 402–histidine 424, and tyrosine 430–histidine 452. Residues glutamate 455–glycine 481 form a disordered region. Positions asparagine 465–glutamate 477 are enriched in polar residues.

The protein belongs to the krueppel C2H2-type zinc-finger protein family. As to expression, highly expressed in heart, skeletal muscle, and brain. Lower expression in liver, lung, kidney, pancreas and placenta.

It localises to the nucleus. Its function is as follows. Transcriptional repressor. Regulator of transcriptional factor complexes and may suppress SRE and AP-1 transcription activities mediated by growth factor signaling pathways. The chain is Zinc finger protein 649 (ZNF649) from Homo sapiens (Human).